A 142-amino-acid polypeptide reads, in one-letter code: Cell division protein SepF (142 aa).

Residues 21 to 31 (ETTTVEEEREE) are compositionally biased toward acidic residues. Positions 21–46 (ETTTVEEEREEQESSHKRQPAISRTN) are disordered.

The protein belongs to the SepF family. As to quaternary structure, homodimer. Interacts with FtsZ.

It localises to the cytoplasm. Functionally, cell division protein that is part of the divisome complex and is recruited early to the Z-ring. Probably stimulates Z-ring formation, perhaps through the cross-linking of FtsZ protofilaments. Its function overlaps with FtsA. The chain is Cell division protein SepF from Brevibacillus brevis (strain 47 / JCM 6285 / NBRC 100599).